We begin with the raw amino-acid sequence, 186 residues long: Casparian strip membrane protein 3 (186 aa).

At 1–26 (MKGSSEHGETSKAAPLGRGGVSKGVS) the chain is on the cytoplasmic side. Residues 27 to 47 (VLDLILRFIAIIGTLASAIAM) traverse the membrane as a helical segment. The Extracellular portion of the chain corresponds to 48-74 (GTTNETLPFFTQFIRFKAQYSDLPTLT). N-linked (GlcNAc...) asparagine glycosylation occurs at Asn-51. The helical transmembrane segment at 75-95 (FFVVANSIVCAYLILSLPLSI) threads the bilayer. Topologically, residues 96–107 (VHIIRSRAKYSR) are cytoplasmic. A helical membrane pass occupies residues 108–128 (LLLIFLDAAMLALVTAGASAA). The Extracellular segment spans residues 129–161 (AAIVYLAHKGNVRANWLAICQQFDSFCERISGS). A helical membrane pass occupies residues 162–182 (LIGSFGAMVMLILLILLSAIA). Residues 183–186 (LARR) lie on the Cytoplasmic side of the membrane.

Belongs to the Casparian strip membrane proteins (CASP) family. As to quaternary structure, homodimer and heterodimers.

It localises to the cell membrane. Its function is as follows. Regulates membrane-cell wall junctions and localized cell wall deposition. Required for establishment of the Casparian strip membrane domain (CSD) and the subsequent formation of Casparian strips, a cell wall modification of the root endodermis that determines an apoplastic barrier between the intraorganismal apoplasm and the extraorganismal apoplasm and prevents lateral diffusion. In Sorghum bicolor (Sorghum), this protein is Casparian strip membrane protein 3.